The chain runs to 370 residues: D-alanine--D-alanine ligase (370 aa).

Residues 144 to 352 enclose the ATP-grasp domain; it reads KKIFADAGIP…YSALIERLVD (209 aa). 177-232 provides a ligand contact to ATP; it reads EEVLTYPVFVKPANLGSSVGISKATNKKELEDAMTEAFLYDRRVVVEQGVVAREIE. Positions 306, 319, and 321 each coordinate Mg(2+).

It belongs to the D-alanine--D-alanine ligase family. Mg(2+) serves as cofactor. It depends on Mn(2+) as a cofactor.

It is found in the cytoplasm. The enzyme catalyses 2 D-alanine + ATP = D-alanyl-D-alanine + ADP + phosphate + H(+). The protein operates within cell wall biogenesis; peptidoglycan biosynthesis. In terms of biological role, cell wall formation. This chain is D-alanine--D-alanine ligase, found in Listeria welshimeri serovar 6b (strain ATCC 35897 / DSM 20650 / CCUG 15529 / CIP 8149 / NCTC 11857 / SLCC 5334 / V8).